Consider the following 556-residue polypeptide: Phenylalanine--tRNA ligase beta subunit (556 aa).

The B5 domain occupies 278 to 353; the sequence is LTPKEFEVEL…IAYGYNNIEP (76 aa). Positions 331, 337, 340, and 341 each coordinate Mg(2+).

The protein belongs to the phenylalanyl-tRNA synthetase beta subunit family. Type 2 subfamily. In terms of assembly, tetramer of two alpha and two beta subunits. It depends on Mg(2+) as a cofactor.

It is found in the cytoplasm. The enzyme catalyses tRNA(Phe) + L-phenylalanine + ATP = L-phenylalanyl-tRNA(Phe) + AMP + diphosphate + H(+). This Pyrococcus horikoshii (strain ATCC 700860 / DSM 12428 / JCM 9974 / NBRC 100139 / OT-3) protein is Phenylalanine--tRNA ligase beta subunit.